Consider the following 147-residue polypeptide: D-aminoacyl-tRNA deacylase (147 aa).

Residues 136–137 (GP) carry the Gly-cisPro motif, important for rejection of L-amino acids motif.

The protein belongs to the DTD family. Homodimer.

It is found in the cytoplasm. The enzyme catalyses glycyl-tRNA(Ala) + H2O = tRNA(Ala) + glycine + H(+). The catalysed reaction is a D-aminoacyl-tRNA + H2O = a tRNA + a D-alpha-amino acid + H(+). An aminoacyl-tRNA editing enzyme that deacylates mischarged D-aminoacyl-tRNAs. Also deacylates mischarged glycyl-tRNA(Ala), protecting cells against glycine mischarging by AlaRS. Acts via tRNA-based rather than protein-based catalysis; rejects L-amino acids rather than detecting D-amino acids in the active site. By recycling D-aminoacyl-tRNA to D-amino acids and free tRNA molecules, this enzyme counteracts the toxicity associated with the formation of D-aminoacyl-tRNA entities in vivo and helps enforce protein L-homochirality. The sequence is that of D-aminoacyl-tRNA deacylase from Streptococcus equi subsp. equi (strain 4047).